The following is a 254-amino-acid chain: UPF0328 protein ECU01_0070/ECU01_1540/ECU02_1570/ECU04_0080/ECU08_2100 (254 aa).

The protein belongs to the UPF0328 family.

The chain is UPF0328 protein ECU01_0070/ECU01_1540/ECU02_1570/ECU04_0080/ECU08_2100 from Encephalitozoon cuniculi (strain GB-M1) (Microsporidian parasite).